A 467-amino-acid chain; its full sequence is Chromosomal replication initiator protein DnaA (467 aa).

A domain I, interacts with DnaA modulators region spans residues 1 to 90; that stretch reads MSLSLWQQCL…KPVTQTPQAA (90 aa). The domain II stretch occupies residues 91-130; sequence VTSNVAAPAQVAQTQPQRAAPSTRSGWDNVPAPAEPTYRS. Over residues 98–111 the composition is skewed to low complexity; sequence PAQVAQTQPQRAAP. Residues 98 to 119 form a disordered region; that stretch reads PAQVAQTQPQRAAPSTRSGWDN. The domain III, AAA+ region stretch occupies residues 131–347; sequence NVNVKHTFDN…GALNRVIANA (217 aa). Residues G175, G177, K178, and T179 each coordinate ATP. Residues 348–467 are domain IV, binds dsDNA; it reads NFTGRAITID…FSNLIRTLSS (120 aa).

This sequence belongs to the DnaA family. As to quaternary structure, oligomerizes as a right-handed, spiral filament on DNA at oriC.

Its subcellular location is the cytoplasm. Functionally, plays an essential role in the initiation and regulation of chromosomal replication. ATP-DnaA binds to the origin of replication (oriC) to initiate formation of the DNA replication initiation complex once per cell cycle. Binds the DnaA box (a 9 base pair repeat at the origin) and separates the double-stranded (ds)DNA. Forms a right-handed helical filament on oriC DNA; dsDNA binds to the exterior of the filament while single-stranded (ss)DNA is stabiized in the filament's interior. The ATP-DnaA-oriC complex binds and stabilizes one strand of the AT-rich DNA unwinding element (DUE), permitting loading of DNA polymerase. After initiation quickly degrades to an ADP-DnaA complex that is not apt for DNA replication. Binds acidic phospholipids. This Shigella boydii serotype 4 (strain Sb227) protein is Chromosomal replication initiator protein DnaA.